The primary structure comprises 334 residues: MYNTDIVIIGSGPVGLFAVFQAGMLGMKCHVIDAQEVIGGQCITLYPEKHIYDIPAYPKITAKELIEQLKSQAAPFNPVYHLNQQAIELNKHNDFFEIKTSKNTIIKSKVIIIAAGAGAFGPNKPPLANIEDFEGKSIFYFINDKSKFLGKNIVVAGGGDSAVDWTIALSEIANKIYLVHRRDKFTAATESIRQLRHIAETGKIELVTGYQLNNLDGHNNELQAVIVKDLQNNIRKLDANILLPFFGLKQDLGPLANWGLNVKLQHIEVDNYYYQTNIKGIYAIGDVAHYVGKLKLIITGFAEAAHSINHAYSRVFDGKALHFEYSTNKYEQKQ.

FAD-binding residues include D33, Q41, Y46, A86, F120, D286, and T327.

It belongs to the ferredoxin--NADP reductase type 2 family. As to quaternary structure, homodimer. The cofactor is FAD.

The enzyme catalyses 2 reduced [2Fe-2S]-[ferredoxin] + NADP(+) + H(+) = 2 oxidized [2Fe-2S]-[ferredoxin] + NADPH. The protein is Ferredoxin--NADP reductase of Rickettsia typhi (strain ATCC VR-144 / Wilmington).